Here is a 549-residue protein sequence, read N- to C-terminus: Glucose-6-phosphate isomerase (549 aa).

Residues K80, K228, and K234 each carry the N6-acetyllysine modification. The active-site Proton donor is the E355. Residues H386 and K514 contribute to the active site.

This sequence belongs to the GPI family.

Its subcellular location is the cytoplasm. The enzyme catalyses alpha-D-glucose 6-phosphate = beta-D-fructose 6-phosphate. It participates in carbohydrate biosynthesis; gluconeogenesis. Its pathway is carbohydrate degradation; glycolysis; D-glyceraldehyde 3-phosphate and glycerone phosphate from D-glucose: step 2/4. Functionally, catalyzes the reversible isomerization of glucose-6-phosphate to fructose-6-phosphate. The protein is Glucose-6-phosphate isomerase of Escherichia coli (strain SE11).